The chain runs to 369 residues: GTPase Obg (369 aa).

The region spanning 1 to 158 is the Obg domain; that stretch reads MFTDVVELTV…RRIKLDLKLI (158 aa). Residues 126–146 are disordered; it reads NTHFKSSTNQRPTYAQPGEKG. Residues 128–138 show a composition bias toward polar residues; that stretch reads HFKSSTNQRPT. In terms of domain architecture, OBG-type G spans 159-362; the sequence is ADVGLVGFPN…LKHALFNLVQ (204 aa). GTP is bound by residues 165–172, 190–194, 212–215, 280–283, and 343–345; these read GFPNVGKS, FTTLT, DIPG, TRAD, and SSA. 2 residues coordinate Mg(2+): serine 172 and threonine 192.

This sequence belongs to the TRAFAC class OBG-HflX-like GTPase superfamily. OBG GTPase family. As to quaternary structure, monomer. Requires Mg(2+) as cofactor.

It localises to the cytoplasm. An essential GTPase which binds GTP, GDP and possibly (p)ppGpp with moderate affinity, with high nucleotide exchange rates and a fairly low GTP hydrolysis rate. Plays a role in control of the cell cycle, stress response, ribosome biogenesis and in those bacteria that undergo differentiation, in morphogenesis control. The protein is GTPase Obg of Sulfurimonas denitrificans (strain ATCC 33889 / DSM 1251) (Thiomicrospira denitrificans (strain ATCC 33889 / DSM 1251)).